Here is a 434-residue protein sequence, read N- to C-terminus: Tungsten-containing formylmethanofuran dehydrogenase 2 subunit B (434 aa).

Residue selenocysteine 120 is a non-standard amino acid, selenocysteine.

Belongs to the FwdB family. In terms of assembly, this enzyme is composed of six subunits FwdA, FwdC, FwdD, FwdE, FwdF and FwdG. W-bis(molybdopterin guanine dinucleotide) serves as cofactor.

The catalysed reaction is N-formylmethanofuran + 2 oxidized [2Fe-2S]-[ferredoxin] + H2O = methanofuran + 2 reduced [2Fe-2S]-[ferredoxin] + CO2 + H(+). It functions in the pathway one-carbon metabolism; methanogenesis from CO(2); 5,10-methenyl-5,6,7,8-tetrahydromethanopterin from CO(2): step 1/3. In terms of biological role, catalyzes the reversible oxidation of CO(2) and methanofuran (MFR) to N-formylmethanofuran (CHO-MFR). This enzyme is oxygen-labile. The polypeptide is Tungsten-containing formylmethanofuran dehydrogenase 2 subunit B (fwdB) (Methanococcus maripaludis (strain DSM 14266 / JCM 13030 / NBRC 101832 / S2 / LL)).